A 585-amino-acid chain; its full sequence is Involucrin (585 aa).

Polar residues predominate over residues 1–15; sequence MSQQHTLPVTLSPAL. The interval 1–132 is disordered; that stretch reads MSQQHTLPVT…LEEEKKLLDQ (132 aa). A lipid anchor (Omega-hydroxyceramide glutamate ester) is attached at Gln-79. A compositionally biased stretch (basic and acidic residues) spans 92 to 115; it reads WEQHEEYQKAENPEQQLKQEKTQR. Residues Gln-118 and Gln-133 are each lipidated (omega-hydroxyceramide glutamate ester). The tract at residues 149–540 is disordered; sequence KEQLLELPEQ…KDLEQQKGQL (392 aa). 23 repeat units span residues 153–162, 163–172, 173–182, 183–192, 193–202, 203–212, 213–222, 223–232, 233–242, 243–252, 253–262, 263–272, 273–282, 283–292, 293–302, 303–312, 313–322, 323–332, 333–342, 343–352, 353–362, 363–372, and 373–382. A 39 X 10 AA approximate tandem repeats of [LP]-[EKG]-[LHVYQEK]-[PLSQE]-[EQDV]-[QHEKRGA]-Q-[EMVQLP]-[GKLE]-[QHVNLD] region spans residues 153–542; sequence LELPEQQEGH…LEQQKGQLEQ (390 aa). The segment covering 159–178 has biased composition (basic and acidic residues); sequence QEGHLKHLEQQEGQLKHPEQ. A compositionally biased stretch (low complexity) spans 179–261; that stretch reads QEGQLELPEQ…QLELSEQQEG (83 aa). Positions 262 to 271 are enriched in basic and acidic residues; sequence QLKHLEHQEG. Basic and acidic residues-rich tracts occupy residues 292-304, 314-328, and 341-360; these read QLKH…KQPE, KHLE…HLEQ, and GQLK…EHQE. The span at 361–383 shows a compositional bias: low complexity; sequence GQLGLPEQQVLQLKQLEKQQGQP. A 24; approximate repeat occupies 383–392; sequence PKHLEEEEGQ. The span at 384–393 shows a compositional bias: basic and acidic residues; it reads KHLEEEEGQL. Repeat copies occupy residues 393–402, 403–412, 413–422, 423–432, 433–442, 443–452, 453–462, 463–472, 473–482, 483–492, and 493–502. 2 stretches are compositionally biased toward basic and acidic residues: residues 415 to 424 and 431 to 444; these read QQERQVEHLE and KHLE…KHLE. A compositionally biased stretch (low complexity) spans 445-462; sequence QQQGQLEVPEQQVGQPKN. The span at 479–488 shows a compositional bias: basic and acidic residues; that stretch reads QVKHLEKQEA. Gln-496 is covalently cross-linked (Isoglutamyl lysine isopeptide (Gln-Lys) (interchain with K-? in other proteins)). Residues 501-535 are compositionally biased toward basic and acidic residues; it reads KHLEQQEKHLEHPEQQDGQLKHLEQQEGQLKDLEQ. One copy of the 36; approximate repeat lies at 503 to 512; that stretch reads LEQQEKHLEH. Repeat copies occupy residues 513–522 and 523–532. The 39; approximate repeat unit spans residues 533 to 542; the sequence is LEQQKGQLEQ.

It belongs to the involucrin family. In terms of assembly, directly or indirectly cross-linked to cornifelin (CNFN). In terms of processing, substrate of transglutaminase. Some glutamines and lysines are cross-linked to other involucrin molecules, to other proteins such as keratin, desmoplakin, periplakin and envoplakin, and to lipids like omega-hydroxyceramide. As to expression, keratinocytes of epidermis and other stratified squamous epithelia.

The protein resides in the cytoplasm. Functionally, part of the insoluble cornified cell envelope (CE) of stratified squamous epithelia. This chain is Involucrin (IVL), found in Homo sapiens (Human).